A 215-amino-acid chain; its full sequence is LexA repressor (215 aa).

A DNA-binding region (H-T-H motif) is located at residues 28 to 48 (RAEIAAELGFSSPNAAEEHLR). Residues serine 133 and lysine 170 each act as for autocatalytic cleavage activity in the active site.

It belongs to the peptidase S24 family. As to quaternary structure, homodimer.

It catalyses the reaction Hydrolysis of Ala-|-Gly bond in repressor LexA.. Its function is as follows. Represses a number of genes involved in the response to DNA damage (SOS response), including recA and lexA. In the presence of single-stranded DNA, RecA interacts with LexA causing an autocatalytic cleavage which disrupts the DNA-binding part of LexA, leading to derepression of the SOS regulon and eventually DNA repair. The polypeptide is LexA repressor (Burkholderia cenocepacia (strain ATCC BAA-245 / DSM 16553 / LMG 16656 / NCTC 13227 / J2315 / CF5610) (Burkholderia cepacia (strain J2315))).